A 217-amino-acid chain; its full sequence is ATP phosphoribosyltransferase (217 aa).

It belongs to the ATP phosphoribosyltransferase family. Short subfamily. In terms of assembly, heteromultimer composed of HisG and HisZ subunits.

The protein resides in the cytoplasm. The enzyme catalyses 1-(5-phospho-beta-D-ribosyl)-ATP + diphosphate = 5-phospho-alpha-D-ribose 1-diphosphate + ATP. Its pathway is amino-acid biosynthesis; L-histidine biosynthesis; L-histidine from 5-phospho-alpha-D-ribose 1-diphosphate: step 1/9. Catalyzes the condensation of ATP and 5-phosphoribose 1-diphosphate to form N'-(5'-phosphoribosyl)-ATP (PR-ATP). Has a crucial role in the pathway because the rate of histidine biosynthesis seems to be controlled primarily by regulation of HisG enzymatic activity. This chain is ATP phosphoribosyltransferase, found in Polaromonas naphthalenivorans (strain CJ2).